Here is a 1323-residue protein sequence, read N- to C-terminus: Traf2 and NCK-interacting protein kinase (1323 aa).

A Protein kinase domain is found at 25 to 289 (FELVELVGNG…TEQLMKHPFI (265 aa)). Residues 31–39 (VGNGTYGQV) and K54 contribute to the ATP site. The active-site Proton acceptor is D153. Phosphothreonine is present on T187. Disordered stretches follow at residues 284–347 (MKHP…LPGE), 397–559 (EQKE…LRPV), and 571–838 (SQGP…NEQY). Basic and acidic residues predominate over residues 288–307 (FIRDQPNERQVRIQLKDHID). Positions 290–1010 (RDQPNERQVR…EIRKYKKRFN (721 aa)) are mediates interaction with NEDD4. Positions 317–335 (DETEYEYSGSEEEEEENDS) are enriched in acidic residues. A phosphoserine mark is found at S324 and S326. Composition is skewed to basic and acidic residues over residues 397–470 (EQKE…ERDY), 477–494 (QRQE…HYKE), and 503–513 (AWAKEVEERSR). Residues S531 and S541 each carry the phosphoserine modification. T552 bears the Phosphothreonine mark. 4 positions are modified to phosphoserine: S571, S579, S581, and S611. The span at 623-640 (RIEKFDRSSWLRQEEDIP) shows a compositional bias: basic and acidic residues. Residues S649, S651, S659, S672, S678, S691, S735, S737, and S740 each carry the phosphoserine modification. A compositionally biased stretch (low complexity) spans 691-726 (SSLQRTSSGSSSSSSTPSSQPSSQGGSQPGSQAGSS). Composition is skewed to basic and acidic residues over residues 746-760 (EPSK…DITR) and 772-790 (KELR…KKVT). The span at 797–810 (EESESSEEEEEDGE) shows a compositional bias: acidic residues. At S922 the chain carries Phosphoserine. The disordered stretch occupies residues 939-960 (FVDPRVYQTSPTDEDEEDDESS). The segment covering 950-959 (TDEDEEDDES) has biased composition (acidic residues). One can recognise a CNH domain in the interval 1010–1297 (NSEILCAALW…KFLCERNDKV (288 aa)).

The protein belongs to the protein kinase superfamily. STE Ser/Thr protein kinase family. STE20 subfamily. As to quaternary structure, interacts (via the CNH domain) with RAP2A (GTP-bound form preferentially); the interaction is direct and required for the activation of TNIK by RAP2A. Interacts with NEDD4; recruits RAP2A to NEDD4. Interacts with TRAF2 and NCK. Interacts with TCF7L2/TCF4 and CTNNB1; the interaction is direct. Interacts with TANC1. Autophosphorylated. Autophosphorylation is activated by RAP2A and induces association to the cytoskeletal fraction.

The protein resides in the nucleus. It localises to the cytoplasm. Its subcellular location is the recycling endosome. The protein localises to the cytoskeleton. It carries out the reaction L-seryl-[protein] + ATP = O-phospho-L-seryl-[protein] + ADP + H(+). The enzyme catalyses L-threonyl-[protein] + ATP = O-phospho-L-threonyl-[protein] + ADP + H(+). Its function is as follows. Serine/threonine kinase that acts as an essential activator of the Wnt signaling pathway. Recruited to promoters of Wnt target genes and required to activate their expression. May act by phosphorylating TCF4/TCF7L2. Appears to act upstream of the JUN N-terminal pathway. May play a role in the response to environmental stress. Part of a signaling complex composed of NEDD4, RAP2A and TNIK which regulates neuronal dendrite extension and arborization during development. More generally, it may play a role in cytoskeletal rearrangements and regulate cell spreading. Phosphorylates SMAD1 on Thr-322. Activator of the Hippo signaling pathway which plays a pivotal role in organ size control and tumor suppression by restricting proliferation and promoting apoptosis. MAP4Ks act in parallel to and are partially redundant with STK3/MST2 and STK4/MST2 in the phosphorylation and activation of LATS1/2, and establish MAP4Ks as components of the expanded Hippo pathway. The chain is Traf2 and NCK-interacting protein kinase (Tnik) from Mus musculus (Mouse).